The chain runs to 313 residues: Acetyl-coenzyme A carboxylase carboxyl transferase subunit alpha (313 aa).

The region spanning K42–K292 is the CoA carboxyltransferase C-terminal domain.

Belongs to the AccA family. Acetyl-CoA carboxylase is a heterohexamer composed of biotin carboxyl carrier protein (AccB), biotin carboxylase (AccC) and two subunits each of ACCase subunit alpha (AccA) and ACCase subunit beta (AccD).

It localises to the cytoplasm. It catalyses the reaction N(6)-carboxybiotinyl-L-lysyl-[protein] + acetyl-CoA = N(6)-biotinyl-L-lysyl-[protein] + malonyl-CoA. It functions in the pathway lipid metabolism; malonyl-CoA biosynthesis; malonyl-CoA from acetyl-CoA: step 1/1. Component of the acetyl coenzyme A carboxylase (ACC) complex. First, biotin carboxylase catalyzes the carboxylation of biotin on its carrier protein (BCCP) and then the CO(2) group is transferred by the carboxyltransferase to acetyl-CoA to form malonyl-CoA. The protein is Acetyl-coenzyme A carboxylase carboxyl transferase subunit alpha of Rhizorhabdus wittichii (strain DSM 6014 / CCUG 31198 / JCM 15750 / NBRC 105917 / EY 4224 / RW1) (Sphingomonas wittichii).